Here is a 137-residue protein sequence, read N- to C-terminus: Large ribosomal subunit protein eL28 (137 aa).

Ser-2 is modified (N-acetylserine). Residues Lys-58 and Lys-65 each participate in a glycyl lysine isopeptide (Lys-Gly) (interchain with G-Cter in SUMO2) cross-link. Ser-115 is modified (phosphoserine).

This sequence belongs to the eukaryotic ribosomal protein eL28 family. As to quaternary structure, component of the large ribosomal subunit.

It is found in the cytoplasm. Component of the large ribosomal subunit. The ribosome is a large ribonucleoprotein complex responsible for the synthesis of proteins in the cell. The polypeptide is Large ribosomal subunit protein eL28 (Rpl28) (Rattus norvegicus (Rat)).